Here is a 121-residue protein sequence, read N- to C-terminus: Small ribosomal subunit protein uS13 (121 aa).

A disordered region spans residues 94–121 (GLPVRGQRTRTNARTRKGKRKTVAGKKK).

Belongs to the universal ribosomal protein uS13 family. As to quaternary structure, part of the 30S ribosomal subunit. Forms a loose heterodimer with protein S19. Forms two bridges to the 50S subunit in the 70S ribosome.

Located at the top of the head of the 30S subunit, it contacts several helices of the 16S rRNA. In the 70S ribosome it contacts the 23S rRNA (bridge B1a) and protein L5 of the 50S subunit (bridge B1b), connecting the 2 subunits; these bridges are implicated in subunit movement. Contacts the tRNAs in the A and P-sites. This Treponema pallidum (strain Nichols) protein is Small ribosomal subunit protein uS13.